A 419-amino-acid polypeptide reads, in one-letter code: UDP-N-acetylglucosamine 1-carboxyvinyltransferase (419 aa).

22–23 contributes to the phosphoenolpyruvate binding site; the sequence is KN. R93 provides a ligand contact to UDP-N-acetyl-alpha-D-glucosamine. The active-site Proton donor is C117. 2-(S-cysteinyl)pyruvic acid O-phosphothioketal is present on C117. Residues D306 and I328 each coordinate UDP-N-acetyl-alpha-D-glucosamine.

It belongs to the EPSP synthase family. MurA subfamily.

It localises to the cytoplasm. It carries out the reaction phosphoenolpyruvate + UDP-N-acetyl-alpha-D-glucosamine = UDP-N-acetyl-3-O-(1-carboxyvinyl)-alpha-D-glucosamine + phosphate. It participates in cell wall biogenesis; peptidoglycan biosynthesis. Its function is as follows. Cell wall formation. Adds enolpyruvyl to UDP-N-acetylglucosamine. This chain is UDP-N-acetylglucosamine 1-carboxyvinyltransferase, found in Idiomarina loihiensis (strain ATCC BAA-735 / DSM 15497 / L2-TR).